The chain runs to 142 residues: Large ribosomal subunit protein uL13 (142 aa).

It belongs to the universal ribosomal protein uL13 family. Part of the 50S ribosomal subunit.

This protein is one of the early assembly proteins of the 50S ribosomal subunit, although it is not seen to bind rRNA by itself. It is important during the early stages of 50S assembly. This chain is Large ribosomal subunit protein uL13, found in Actinobacillus succinogenes (strain ATCC 55618 / DSM 22257 / CCUG 43843 / 130Z).